The following is a 1135-amino-acid chain: Potassium channel subfamily T member 2 (1135 aa).

Topologically, residues 1–63 (MVDLESEVPP…KNQRSSLRIR (63 aa)) are cytoplasmic. The chain crosses the membrane as a helical span at residues 64-84 (LFNFSLKLLSCLLYIIRVLLE). At 85–101 (NPSQGNEWSHIFWVNRS) the chain is on the extracellular side. The N-linked (GlcNAc...) asparagine glycan is linked to N99. The helical transmembrane segment at 102–122 (LPLWGLQVSVALISLFETILL) threads the bilayer. The Cytoplasmic portion of the chain corresponds to 123–137 (GYLSYKGNIWEQILR). The chain crosses the membrane as a helical span at residues 138-158 (IPFILEIINAVPFIISIFWPS). Topologically, residues 159-164 (LRNLFV) are extracellular. A helical membrane pass occupies residues 165-185 (PVFLNCWLAKHALENMINDLH). At 186–198 (RAIQRTQSAMFNQ) the chain is on the cytoplasmic side. Residues 199-219 (VLILISTLLCLIFTCICGIQH) form a helical membrane-spanning segment. The Extracellular segment spans residues 220–228 (LERIGKKLN). An intramembrane region (pore-forming) is located at residues 229–249 (LFDSLYFCIVTFSTVGFGDVT). Residues 250–256 (PETWSSK) are Extracellular-facing. Residues 257–277 (LFVVAMICVALVVLPIQFEQL) form a helical membrane-spanning segment. At 278–1135 (AYLWMERQKS…GQDSREETQL (858 aa)) the chain is on the cytoplasmic side. 2 RCK N-terminal domains span residues 299–435 (EKHV…DHVV) and 718–858 (NKLI…CYSL). 3 disordered regions span residues 977–1010 (VEEW…HPLL), 1017–1036 (WARR…AEKI), and 1113–1135 (SEPS…ETQL). Basic residues predominate over residues 1017-1030 (WARRLSRKGPKHSG). Over residues 1118 to 1127 (RNSICNVTGQ) the composition is skewed to polar residues.

The protein belongs to the potassium channel family. Calcium-activated (TC 1.A.1.3) subfamily. KCa4.2/KCNT2 sub-subfamily. Homotetramer. Forms heteromeric channels with KCNT1; these heterodimer channels differ from the homomers in their unitary conductance, kinetic behavior, subcellular localization, and response to activation of protein kinase C. In terms of processing, phosphorylated by protein kinase C. Phosphorylation of the C-terminal domain inhibits channel activity.

The protein resides in the cell membrane. The enzyme catalyses K(+)(in) = K(+)(out). Its activity is regulated as follows. Are normally in a closed state unless activated by an increase in intracellular Na(+) and Cl(-). Inhibited upon stimulation of G-protein coupled receptors, such as CHRM1 and GRM1. There is conflicting data about the effect of ATP on KNCT2 channels activity. Intracellular ATP was initially report to inhibit the channel activity. However, others studies conclude that KNCT2 channels are not inhibited by intracellular ATP. In terms of biological role, sodium-activated and chloride-activated potassium channel. Produces rapidly activating outward rectifier K(+) currents. Contributes to regulate neuronal excitability. The sequence is that of Potassium channel subfamily T member 2 (KCNT2) from Homo sapiens (Human).